A 772-amino-acid polypeptide reads, in one-letter code: 5-methyltetrahydropteroyltriglutamate--homocysteine methyltransferase (772 aa).

Residues 24 to 27 (RELK) and Lys-120 each bind 5-methyltetrahydropteroyltri-L-glutamate. Residues 446-448 (IGS) and Glu-499 each bind L-homocysteine. L-methionine is bound by residues 446-448 (IGS) and Glu-499. A 5-methyltetrahydropteroyltri-L-glutamate-binding site is contributed by Trp-576. L-homocysteine is bound at residue Asp-614. Asp-614 is an L-methionine binding site. Glu-620 provides a ligand contact to 5-methyltetrahydropteroyltri-L-glutamate. 3 residues coordinate Zn(2+): His-656, Cys-658, and Glu-680. His-709 functions as the Proton donor in the catalytic mechanism. Cys-741 is a binding site for Zn(2+).

It belongs to the vitamin-B12 independent methionine synthase family. It depends on Zn(2+) as a cofactor.

It catalyses the reaction 5-methyltetrahydropteroyltri-L-glutamate + L-homocysteine = tetrahydropteroyltri-L-glutamate + L-methionine. It participates in amino-acid biosynthesis; L-methionine biosynthesis via de novo pathway; L-methionine from L-homocysteine (MetE route): step 1/1. Its function is as follows. Catalyzes the transfer of a methyl group from 5-methyltetrahydrofolate to homocysteine resulting in methionine formation. This is 5-methyltetrahydropteroyltriglutamate--homocysteine methyltransferase from Streptomyces coelicolor (strain ATCC BAA-471 / A3(2) / M145).